The following is a 215-amino-acid chain: MOB kinase activator-like 1A (215 aa).

The segment at 1–27 (MSLFGLGRNQKTFRPKKSAPSGSKGAQ) is disordered. Residues Cys-79, Cys-84, His-161, and His-166 each coordinate Zn(2+).

Belongs to the MOB1/phocein family. In terms of assembly, interacts with SIK1 at the plasma membrane and in the nucleus. In terms of tissue distribution, constitutively expressed. In 3- to 4-day-old seedlings, expression is high in the shoot apical meristem and along the vasculature in cotyledons, hypocotyls and roots. At the root tip, expression is detected in columella and lateral root cap cells as well as in the stem cell niche around the quiescent center (QC). The levels of expression decrease progressively in the meristematic zone from the root tip towards the base of the root, becoming stronger again in the elongation zone. In flowers, expression appears localized in ovules and pollen.

It is found in the nucleus. Its subcellular location is the cell membrane. The protein resides in the vacuole membrane. In terms of biological role, plays a key role in regulation of cell expansion and cell division. Required for proper plant development, the correct patterning of the root meristem and the control of root growth. Involved in both sporogenesis and gametogenesis. The sequence is that of MOB kinase activator-like 1A from Arabidopsis thaliana (Mouse-ear cress).